Consider the following 681-residue polypeptide: Transmembrane protein 168-A (681 aa).

9 consecutive transmembrane segments (helical) span residues 16 to 36 (FLRC…CLGM), 47 to 67 (MILV…ILYY), 73 to 93 (SASL…LCFL), 135 to 155 (PVVI…ASIS), 156 to 176 (LVFD…ALII), 184 to 204 (LALP…FQSL), 252 to 272 (FSLF…AFKL), 281 to 301 (VIPG…VFLV), and 346 to 365 (LVLF…WQVA). Asn517 carries N-linked (GlcNAc...) asparagine glycosylation.

The protein belongs to the TMEM168 family.

It is found in the nucleus membrane. In terms of biological role, plays a key role in maintaining the cardiac electrical stability by modulating cell surface expression of SCN5A. In Danio rerio (Zebrafish), this protein is Transmembrane protein 168-A (tmem168a).